The primary structure comprises 355 residues: Peptide chain release factor 1 (355 aa).

Q231 carries the post-translational modification N5-methylglutamine.

It belongs to the prokaryotic/mitochondrial release factor family. Methylated by PrmC. Methylation increases the termination efficiency of RF1.

The protein localises to the cytoplasm. Its function is as follows. Peptide chain release factor 1 directs the termination of translation in response to the peptide chain termination codons UAG and UAA. In Sulfurovum sp. (strain NBC37-1), this protein is Peptide chain release factor 1.